The chain runs to 1324 residues: Sal-like protein 1 (1324 aa).

The interval 1 to 42 (MSRRKQAKPQHFQSDPEVASLPRRDGDTEKGQPSRPTKSKDA) is disordered. A compositionally biased stretch (basic and acidic residues) spans 22-42 (PRRDGDTEKGQPSRPTKSKDA). The segment at 43 to 65 (HVCGRCCAEFFELSDLLLHKKNC) adopts a C2H2-type 1; atypical zinc-finger fold. 4 disordered regions span residues 77 to 102 (NPASPPETFSPSPPPDNPDEQMNDTV), 108 to 127 (VDCSDLSEHNGLDREESMEV), 132 to 172 (ANKS…TSAI), and 317 to 336 (PPIQLPQSSSGNTIIPSNSG). Over residues 113 to 124 (LSEHNGLDREES) the composition is skewed to basic and acidic residues. The span at 135-158 (SGSGTSSGSHSSTAPSSSSSSSSS) shows a compositional bias: low complexity. Over residues 321–336 (LPQSSSGNTIIPSNSG) the composition is skewed to polar residues. Residue lysine 439 forms a Glycyl lysine isopeptide (Lys-Gly) (interchain with G-Cter in SUMO2) linkage. C2H2-type zinc fingers lie at residues 449–471 (HKCRFCAKVFGSDSALQIHLRSH) and 477–499 (FKCNICGNRFSTKGNLKVHFQRH). The tract at residues 577–646 (PIPISHSATS…ASSSVLSSPA (70 aa)) is disordered. Serine 590, serine 593, and serine 595 each carry phosphoserine. Low complexity predominate over residues 633-646 (SVPTASSSVLSSPA). Residues lysine 673, lysine 690, and lysine 701 each participate in a glycyl lysine isopeptide (Lys-Gly) (interchain with G-Cter in SUMO2) cross-link. 3 consecutive C2H2-type zinc fingers follow at residues 706–728 (NECIICHRVLSCQSALKMHYRTH), 734–756 (FKCKICGRAFTTKGNLKTHYSVH), and 766–788 (HSCPICQKKFTNAVVLQQHIRMH). Disordered stretches follow at residues 790–856 (GGQI…SSPL) and 894–963 (EGDV…LSPT). Polar residues predominate over residues 802–811 (YSESMESDTG). The span at 820–833 (DLDNFSDENMEDCP) shows a compositional bias: acidic residues. The span at 843–856 (SADASQDSLSSSPL) shows a compositional bias: low complexity. Over residues 899–936 (TNDSSSVGGDMESQSAGSPAISESTSSMQALSPSNSTQ) the composition is skewed to polar residues. Positions 937–949 (EFHKSPSIEEKPQ) are enriched in basic and acidic residues. Phosphoserine occurs at positions 941 and 943. Residues lysine 947 and lysine 982 each participate in a glycyl lysine isopeptide (Lys-Gly) (interchain with G-Cter in SUMO2) cross-link. C2H2-type zinc fingers lie at residues 1001–1023 (TACDICGKTFACQSALDIHYRSH) and 1029–1051 (FICTVCNRGFSTKGNLKQHMLTH). Lysine 1086 is covalently cross-linked (Glycyl lysine isopeptide (Lys-Gly) (interchain with G-Cter in SUMO2)). A disordered region spans residues 1095–1120 (VSPQDSKDTPTSHVPSGPLSSSATSP). Polar residues predominate over residues 1105 to 1119 (TSHVPSGPLSSSATS). 2 C2H2-type zinc fingers span residues 1134 to 1156 (HYCNTCGKTFSSSSALQIHERTH) and 1162 to 1184 (FACTICGRAFTTKGNLKVHMGTH). Glycyl lysine isopeptide (Lys-Gly) (interchain with G-Cter in SUMO2) cross-links involve residues lysine 1219, lysine 1299, and lysine 1319.

It belongs to the sal C2H2-type zinc-finger protein family. In terms of assembly, may associate with NuRD histone deacetylase complex (HDAC). Interacts with components of HDAC complex including HDAC1, HDAC2, RBBP4, RBPP7, MTA1 and MTA2. Interacts with CCNQ. Interacts with NSD2 (via PHD-type zinc fingers 1, 2 and 3). Highest levels in kidney. Lower levels in adult brain (enriched in corpus callosum, lower expression in substantia nigra) and liver.

The protein localises to the nucleus. Transcriptional repressor involved in organogenesis. Plays an essential role in ureteric bud invasion during kidney development. This Homo sapiens (Human) protein is Sal-like protein 1 (SALL1).